Here is a 1129-residue protein sequence, read N- to C-terminus: CRISPR-associated endonuclease Cas12b (1129 aa).

Residues 1-14 (MAVKSIKVKLRLDD) are WED-I (OBD-I) domain. The segment at 4–9 (KSIKVK) is binds sgRNA. Positions 15–386 (MPEIRAGLWK…FATFTLPDAT (372 aa)) are REC1 (Helical-1)domain. 2 binds DNA protospacer adjacent motif (PAM) on target DNA regions span residues 118 to 122 (QQIAR) and 143 to 144 (GN). The interval 387–518 (AHPIWTRFDK…QSQSEARGER (132 aa)) is WED-II (OBD-II) domain. The binds sgRNA stretch occupies residues 442 to 446 (SMSEQ). The segment at 519–628 (RPPYAAVFRL…LLKLPGETES (110 aa)) is ruvC-I domain. The active-site For DNase activity of RuvC domain is the aspartate 570. Positions 573–574 (LR) are binds non-target ssDNA. A bridge helix domain region spans residues 629-658 (KDLRAIREERQRTLRQLRTQLAYLRLLVRC). An REC2 (Helical-II) domain region spans residues 659 to 784 (GSEDVGRRER…SFFGKVSGQV (126 aa)). Binds sgRNA regions lie at residues 742 to 746 (RPKIR), 753 to 754 (VG), 792 to 796 (RFAIT), 800 to 819 (HIDHAKEDRLKKLADRIIME), and 835 to 839 (WVAKY). The interval 785-900 (IRAEKGSRFA…GTMYAAFSSR (116 aa)) is ruvC-II domain. Glutamate 848 functions as the For DNase activity of RuvC domain in the catalytic mechanism. The tract at residues 897–900 (FSSR) is binds non-target ssDNA. Phosphate contacts are provided by serine 899 and arginine 911. A nuc-I domain region spans residues 901-974 (FDARTGAPGI…SAEEGDFHQI (74 aa)). Positions 973 to 978 (QIHADL) are binds sgRNA. The ruvC-III domain stretch occupies residues 975–993 (HADLNAAQNLQQRLWSDFD). Aspartate 977 serves as the catalytic For DNase activity of RuvC domain. Positions 994-1129 (ISQIRLRCDW…DSACENTGDI (136 aa)) are nuc-II domain.

It belongs to the CRISPR-associated endonuclease Cas12b family. In terms of assembly, monomer. It depends on a divalent metal cation as a cofactor.

Functionally, CRISPR (clustered regularly interspaced short palindromic repeat), is an adaptive immune system that provides protection against mobile genetic elements (viruses, transposable elements and conjugative plasmids). CRISPR clusters contain sequences complementary to antecedent mobile elements and target invading nucleic acids. CRISPR clusters are transcribed and processed into CRISPR RNA (crRNA). In type II CRISPR systems correct processing of pre-crRNA requires a trans-encoded small RNA (tracrRNA), endogenous ribonuclease 3 (rnc) and this protein. The tracrRNA serves as a guide for ribonuclease 3-aided processing of pre-crRNA. Protein-crRNA-tracrRNA endonucleolytically cleave dsDNA target complementary to the spacer; protein is inactive in the absence of crRNA homologous to the target and tracrRNA. Recognizes a short motif in the CRISPR repeat sequences (the 5' PAM or protospacer adjacent motif, TTN in this organism) to help distinguish self versus nonself, as targets within the bacterial CRISPR locus do not have PAMs. PAM recognition is also required for catalytic activity. Cleavage results in staggered 6-8 base 5'-overhangs 14-17 and 23-24 bases downstream of the PAM (protospacer adjacent motif) on the non-target and target strands respectively. Both target and non-target strand DNA are probably independently cleaved in the same active site. In Alicyclobacillus acidoterrestris (strain ATCC 49025 / DSM 3922 / CIP 106132 / NCIMB 13137 / GD3B), this protein is CRISPR-associated endonuclease Cas12b.